A 202-amino-acid polypeptide reads, in one-letter code: Small ribosomal subunit protein uS4 (202 aa).

Residues 22-48 (TGKELARRPYAPGDHGQGRRGKLSEYG) are disordered. Residues 93-154 (RRLDNMVYRL…KSKKLAVITG (62 aa)) form the S4 RNA-binding domain.

The protein belongs to the universal ribosomal protein uS4 family. In terms of assembly, part of the 30S ribosomal subunit. Contacts protein S5. The interaction surface between S4 and S5 is involved in control of translational fidelity.

Its function is as follows. One of the primary rRNA binding proteins, it binds directly to 16S rRNA where it nucleates assembly of the body of the 30S subunit. In terms of biological role, with S5 and S12 plays an important role in translational accuracy. The chain is Small ribosomal subunit protein uS4 from Lactiplantibacillus plantarum (strain ATCC BAA-793 / NCIMB 8826 / WCFS1) (Lactobacillus plantarum).